Here is a 469-residue protein sequence, read N- to C-terminus: Protein translocase subunit SecY (469 aa).

The Cytoplasmic portion of the chain corresponds to 1-20 (MSFIDSLATLGQYLPAVTKP). A helical membrane pass occupies residues 21-47 (KEKPSLGQKLVWSLVAVIIYLIMASTP). Over 48–59 (LYGITSASFFKN) the chain is Extracellular. An intramembrane region (helical) is located at residues 60–67 (LILEQIIF). The chain crosses the membrane as a discontinuously helical span at residues 60-88 (LILEQIIFASTTGTLAQLGIGPIITAGLI). Residues 68-79 (ASTTGTLAQLGI) lie within the membrane without spanning it. An intramembrane region (helical) is located at residues 80–88 (GPIITAGLI). Topologically, residues 89 to 109 (MQILAGSKLISIDLNDPDDRV) are cytoplasmic. Residues 110–131 (KFTEAQKGLAFIFILVESALFG) form a helical membrane-spanning segment. Residues 132–146 (YVLARTSTTINASIL) are Extracellular-facing. The helical transmembrane segment at 147 to 171 (FIAGIVIAQLIVATYLILLLDELIQ) threads the bilayer. The Cytoplasmic segment spans residues 172–178 (KGWGLGS). The helical transmembrane segment at 179-197 (GVSLFILAGVMKIMFWDMF) threads the bilayer. The Extracellular portion of the chain corresponds to 198 to 240 (GIASVSSQNLPIGFFPALFTALASHSDVLNLIVNTSTKNLFQP). Residues 241-262 (DLVGLVTTIALIIITIYLTTMT) form a helical membrane-spanning segment. Residues 263–287 (IEIPVTSQKLRGIRRTIPLNFLYVS) lie on the Cytoplasmic side of the membrane. Residues 288-309 (SIPVIFVAVLGSDIQLFASLAS) traverse the membrane as a helical segment. Over 310–347 (YVSPSASNILNTVSGVFFFPPPNSAIPHSIYAVVLDPL) the chain is Extracellular. The chain crosses the membrane as a helical span at residues 348-367 (GALEYAVVFIVLSILFGILW). Residues 368–410 (VDVAGLDPATQAQQLVEAGIEIPGVRNNPKIIEGILARYIYPL) lie on the Cytoplasmic side of the membrane. The chain crosses the membrane as a helical span at residues 411–429 (AFFSSIIVGLIAVFATLLG). Over 430–432 (AYG) the chain is Extracellular. The chain crosses the membrane as a helical span at residues 433–447 (TGIGILLAVTIAIQY). Topologically, residues 448–469 (YSLLAYERSLEMYPLLKRLIGE) are cytoplasmic.

Belongs to the SecY/SEC61-alpha family. As to quaternary structure, component of the Sec protein translocase complex. Heterotrimer consisting of alpha (SecY), beta (SecG) and gamma (SecE) subunits. The heterotrimers can form oligomers, although 1 heterotrimer is thought to be able to translocate proteins. Interacts with the ribosome. May interact with SecDF, and other proteins may be involved.

The protein resides in the cell membrane. In terms of biological role, the central subunit of the protein translocation channel SecYEG. Consists of two halves formed by TMs 1-5 and 6-10. These two domains form a lateral gate at the front which open onto the bilayer between TMs 2 and 7, and are clamped together by SecE at the back. The channel is closed by both a pore ring composed of hydrophobic SecY resides and a short helix (helix 2A) on the extracellular side of the membrane which forms a plug. The plug probably moves laterally to allow the channel to open. The ring and the pore may move independently. This chain is Protein translocase subunit SecY, found in Saccharolobus solfataricus (strain ATCC 35092 / DSM 1617 / JCM 11322 / P2) (Sulfolobus solfataricus).